The sequence spans 361 residues: Spermidine/putrescine import ATP-binding protein PotA (361 aa).

The ABC transporter domain occupies Leu-4–Leu-234. Gly-36–Thr-43 contacts ATP.

It belongs to the ABC transporter superfamily. Spermidine/putrescine importer (TC 3.A.1.11.1) family. The complex is composed of two ATP-binding proteins (PotA), two transmembrane proteins (PotB and PotC) and a solute-binding protein (PotD).

It localises to the cell inner membrane. The catalysed reaction is ATP + H2O + polyamine-[polyamine-binding protein]Side 1 = ADP + phosphate + polyamineSide 2 + [polyamine-binding protein]Side 1.. Functionally, part of the ABC transporter complex PotABCD involved in spermidine/putrescine import. Responsible for energy coupling to the transport system. The polypeptide is Spermidine/putrescine import ATP-binding protein PotA (Chromobacterium violaceum (strain ATCC 12472 / DSM 30191 / JCM 1249 / CCUG 213 / NBRC 12614 / NCIMB 9131 / NCTC 9757 / MK)).